A 286-amino-acid chain; its full sequence is Hypersensitive-induced response protein 1 (286 aa).

Glycine 2 is lipidated: N-myristoyl glycine. Positions 114–190 form a coiled coil; it reads LDDVFEQKND…EKILQIKRAE (77 aa).

Self-interacts and forms heteromers. Interacts with NB-LRR class of R proteins before R proteins (e.g. RPS2 or RPM1) are activated by the effectors. Interacts with LRR1.

It localises to the cell membrane. Its function is as follows. Positive regulator of hypersensitive response (HR)-like cell death. May be involved in potassium ion channel regulation. In Arabidopsis thaliana (Mouse-ear cress), this protein is Hypersensitive-induced response protein 1.